A 323-amino-acid chain; its full sequence is RNA polymerase II holoenzyme cyclin-like subunit (323 aa).

The region spanning 45–176 (DSKQNGIEQS…LLEELESYLI (132 aa)) is the Cyclin N-terminal domain.

It belongs to the cyclin family. Cyclin C subfamily. In terms of assembly, component of the SRB8-11 complex which consists of SRB8, SSN2/SRB9, SSN3/SRB10 and SSN8/SRB11. The SRB8-11 complex associates with the Mediator complex. The SSN3/SRB10 and SSN8/SRB11 kinase-cyclin pair also associate with the RNA polymerase II holoenzyme. Interacts with ASK10.

The protein resides in the nucleus. Its function is as follows. Component of the SRB8-11 complex. The SRB8-11 complex is a regulatory module of the Mediator complex which is itself involved in regulation of basal and activated RNA polymerase II-dependent transcription. The SRB8-11 complex may be involved in the transcriptional repression of a subset of genes regulated by Mediator. It may inhibit the association of the Mediator complex with RNA polymerase II to form the holoenzyme complex. The SRB8-11 complex phosphorylates the C-terminal domain (CTD) of the largest subunit of RNA polymerase II RPB1 at serines 2 and 5. The SSN3/SRB10 and SSN8/SRB11 kinase-cyclin pair may also positively and negatively regulate numerous transcriptional activators in response to changes in nutritional and physiological conditions. The protein is RNA polymerase II holoenzyme cyclin-like subunit (SSN8) of Saccharomyces cerevisiae (strain ATCC 204508 / S288c) (Baker's yeast).